The sequence spans 205 residues: Thymidylate kinase (205 aa).

ATP is bound at residue 10 to 17 (GIDGAGKT).

It belongs to the thymidylate kinase family.

The catalysed reaction is dTMP + ATP = dTDP + ADP. In terms of biological role, phosphorylation of dTMP to form dTDP in both de novo and salvage pathways of dTTP synthesis. The polypeptide is Thymidylate kinase (Nitrosospira multiformis (strain ATCC 25196 / NCIMB 11849 / C 71)).